The following is a 350-amino-acid chain: Cilia- and flagella-associated protein 36 (350 aa).

Positions 142 to 167 (SELEQQEMKILQEVLRRSKEEYDLQM) form a coiled coil. 2 disordered regions span residues 171-233 (GLGS…ATTA) and 301-337 (RQTGKGLTDTAAAAAPEPKPATQEISVEEKKKLQKRK). Polar residues predominate over residues 177 to 220 (LASTSSSVSETPQNPEQRLSNGVSDPLTLTQPDSEMEESSTATQ). Residues 280–350 (VALQQRSEYL…EKLKEEVIKK (71 aa)) adopt a coiled-coil conformation.

Belongs to the CFAP36 family.

The protein localises to the nucleus. It localises to the cytoplasm. It is found in the cell projection. Its subcellular location is the cilium. The protein resides in the flagellum. This Danio rerio (Zebrafish) protein is Cilia- and flagella-associated protein 36.